A 125-amino-acid chain; its full sequence is Small ribosomal subunit protein uS13 (125 aa).

Residues 94–125 form a disordered region; it reads SLPVRGQRTQTNARTRKGKRKTVAGKKKAVKK. Positions 107-125 are enriched in basic residues; it reads RTRKGKRKTVAGKKKAVKK.

This sequence belongs to the universal ribosomal protein uS13 family. As to quaternary structure, part of the 30S ribosomal subunit. Forms a loose heterodimer with protein S19. Forms two bridges to the 50S subunit in the 70S ribosome.

Functionally, located at the top of the head of the 30S subunit, it contacts several helices of the 16S rRNA. In the 70S ribosome it contacts the 23S rRNA (bridge B1a) and protein L5 of the 50S subunit (bridge B1b), connecting the 2 subunits; these bridges are implicated in subunit movement. Contacts the tRNAs in the A and P-sites. In Prosthecochloris aestuarii (strain DSM 271 / SK 413), this protein is Small ribosomal subunit protein uS13.